The chain runs to 549 residues: Glucose-6-phosphate isomerase (549 aa).

Catalysis depends on E353, which acts as the Proton donor. Residues H384 and K510 contribute to the active site.

It belongs to the GPI family.

The protein resides in the cytoplasm. The enzyme catalyses alpha-D-glucose 6-phosphate = beta-D-fructose 6-phosphate. The protein operates within carbohydrate biosynthesis; gluconeogenesis. It participates in carbohydrate degradation; glycolysis; D-glyceraldehyde 3-phosphate and glycerone phosphate from D-glucose: step 2/4. Functionally, catalyzes the reversible isomerization of glucose-6-phosphate to fructose-6-phosphate. The protein is Glucose-6-phosphate isomerase of Mycolicibacterium smegmatis (Mycobacterium smegmatis).